Consider the following 263-residue polypeptide: 3-deoxy-manno-octulosonate cytidylyltransferase (263 aa).

Belongs to the KdsB family.

The protein localises to the cytoplasm. It catalyses the reaction 3-deoxy-alpha-D-manno-oct-2-ulosonate + CTP = CMP-3-deoxy-beta-D-manno-octulosonate + diphosphate. The protein operates within nucleotide-sugar biosynthesis; CMP-3-deoxy-D-manno-octulosonate biosynthesis; CMP-3-deoxy-D-manno-octulosonate from 3-deoxy-D-manno-octulosonate and CTP: step 1/1. It participates in bacterial outer membrane biogenesis; lipopolysaccharide biosynthesis. Activates KDO (a required 8-carbon sugar) for incorporation into bacterial lipopolysaccharide in Gram-negative bacteria. The sequence is that of 3-deoxy-manno-octulosonate cytidylyltransferase from Burkholderia vietnamiensis (strain G4 / LMG 22486) (Burkholderia cepacia (strain R1808)).